Here is a 376-residue protein sequence, read N- to C-terminus: Queuine tRNA-ribosyltransferase (376 aa).

The Proton acceptor role is filled by D92. Residues 92-96 (DSGGF), D146, Q190, and G217 each bind substrate. Residues 248-254 (GVGRPED) form an RNA binding region. D267 functions as the Nucleophile in the catalytic mechanism. The segment at 272 to 276 (TRNAR) is RNA binding; important for wobble base 34 recognition. Residues C305, C307, C310, and H337 each contribute to the Zn(2+) site.

The protein belongs to the queuine tRNA-ribosyltransferase family. Homodimer. Within each dimer, one monomer is responsible for RNA recognition and catalysis, while the other monomer binds to the replacement base PreQ1. Requires Zn(2+) as cofactor.

It carries out the reaction 7-aminomethyl-7-carbaguanine + guanosine(34) in tRNA = 7-aminomethyl-7-carbaguanosine(34) in tRNA + guanine. The protein operates within tRNA modification; tRNA-queuosine biosynthesis. Catalyzes the base-exchange of a guanine (G) residue with the queuine precursor 7-aminomethyl-7-deazaguanine (PreQ1) at position 34 (anticodon wobble position) in tRNAs with GU(N) anticodons (tRNA-Asp, -Asn, -His and -Tyr). Catalysis occurs through a double-displacement mechanism. The nucleophile active site attacks the C1' of nucleotide 34 to detach the guanine base from the RNA, forming a covalent enzyme-RNA intermediate. The proton acceptor active site deprotonates the incoming PreQ1, allowing a nucleophilic attack on the C1' of the ribose to form the product. After dissociation, two additional enzymatic reactions on the tRNA convert PreQ1 to queuine (Q), resulting in the hypermodified nucleoside queuosine (7-(((4,5-cis-dihydroxy-2-cyclopenten-1-yl)amino)methyl)-7-deazaguanosine). The chain is Queuine tRNA-ribosyltransferase from Stenotrophomonas maltophilia (strain K279a).